Here is a 620-residue protein sequence, read N- to C-terminus: Leucine-rich repeat and immunoglobulin-like domain-containing nogo receptor-interacting protein 1 (620 aa).

An N-terminal signal peptide occupies residues 1–41 (MQVSKRMLAGGVRSMPSPLLACWQPILLLVLGSVLSGSATG). Cystine bridges form between cysteine 42–cysteine 48 and cysteine 46–cysteine 57. In terms of domain architecture, LRRNT spans 42–71 (CPPRCECSAQDRAVLCHRKRFVAVPEGIPT). Over 42-561 (CPPRCECSAQ…FDIKTLIIAT (520 aa)) the chain is Extracellular. LRR repeat units lie at residues 72–93 (ETRL…EFAS), 96–117 (HLEE…AFNN), 120–141 (NLRT…VFTG), 144–165 (NLTK…MFQD), 168–189 (NLKS…AFSG), 192–213 (SLEQ…ALSH), 216–237 (GLIV…SFKR), 264–285 (NLTS…AVRH), 288–309 (YLRF…MLHE), 312–333 (RLQE…AFRG), and 336–357 (YLRV…VFHS). The N-linked (GlcNAc...) asparagine glycan is linked to asparagine 144. The N-linked (GlcNAc...) asparagine glycan is linked to asparagine 202. 3 N-linked (GlcNAc...) asparagine glycosylation sites follow: asparagine 264, asparagine 274, and asparagine 293. Residue asparagine 341 is glycosylated (N-linked (GlcNAc...) asparagine). The 55-residue stretch at 369–423 (NPLACDCRLLWVFRRRWRLNFNRQQPTCATPEFVQGKEFKDFPDVLLPNYFTCRR) folds into the LRRCT domain. 3 cysteine pairs are disulfide-bonded: cysteine 373/cysteine 396, cysteine 375/cysteine 421, and cysteine 446/cysteine 497. One can recognise an Ig-like C2-type domain in the interval 411–513 (PDVLLPNYFT…GNDSMPAHLH (103 aa)). N-linked (GlcNAc...) asparagine glycans are attached at residues asparagine 492, asparagine 505, asparagine 526, and asparagine 542. Residues 562–582 (TMGFISFLGVVLFCLVLLFLW) traverse the membrane as a helical segment. The Cytoplasmic segment spans residues 583-620 (SRGKGNTKHNIEIEYVPRKSDAGISSADAPRKFNMKMI). A Phosphoserine modification is found at serine 602.

As to quaternary structure, homotetramer. Forms a ternary complex with RTN4R/NGFR and RTN4R/TNFRSF19. Interacts with NGRF and MYT1L. Interacts with RTN4R. N-glycosylated. Contains predominantly high-mannose glycans. Expressed exclusively in the central nervous system. Highest level in the in amygdala, hippocampus, thalamus and cerebral cortex. In the rest of the brain a basal expression seems to be always present. Up-regulated in substantia nigra neurons from Parkinson disease patients.

The protein localises to the cell membrane. Functional component of the Nogo receptor signaling complex (RTN4R/NGFR) in RhoA activation responsible for some inhibition of axonal regeneration by myelin-associated factors. Is also an important negative regulator of oligodentrocyte differentiation and axonal myelination. Acts in conjunction with RTN4 and RTN4R in regulating neuronal precursor cell motility during cortical development. This chain is Leucine-rich repeat and immunoglobulin-like domain-containing nogo receptor-interacting protein 1 (LINGO1), found in Homo sapiens (Human).